A 312-amino-acid polypeptide reads, in one-letter code: tRNA-cytidine(32) 2-sulfurtransferase (312 aa).

The short motif at 47-52 is the PP-loop motif element; sequence SGGKDS. The [4Fe-4S] cluster site is built by Cys122, Cys125, and Cys213.

It belongs to the TtcA family. In terms of assembly, homodimer. Mg(2+) serves as cofactor. Requires [4Fe-4S] cluster as cofactor.

It is found in the cytoplasm. It catalyses the reaction cytidine(32) in tRNA + S-sulfanyl-L-cysteinyl-[cysteine desulfurase] + AH2 + ATP = 2-thiocytidine(32) in tRNA + L-cysteinyl-[cysteine desulfurase] + A + AMP + diphosphate + H(+). It participates in tRNA modification. Functionally, catalyzes the ATP-dependent 2-thiolation of cytidine in position 32 of tRNA, to form 2-thiocytidine (s(2)C32). The sulfur atoms are provided by the cysteine/cysteine desulfurase (IscS) system. The protein is tRNA-cytidine(32) 2-sulfurtransferase of Actinobacillus succinogenes (strain ATCC 55618 / DSM 22257 / CCUG 43843 / 130Z).